The sequence spans 177 residues: Nucleoside triphosphate/diphosphate phosphatase (177 aa).

The active-site Proton donor is Arg-23. 6 residues coordinate Mg(2+): Asn-87, Asp-103, Asp-105, Asp-107, Asp-120, and Glu-123.

This sequence belongs to the Ntdp family. Mg(2+) is required as a cofactor.

The catalysed reaction is a ribonucleoside 5'-triphosphate + H2O = a ribonucleoside 5'-diphosphate + phosphate + H(+). The enzyme catalyses a ribonucleoside 5'-diphosphate + H2O = a ribonucleoside 5'-phosphate + phosphate + H(+). Functionally, has nucleoside phosphatase activity towards nucleoside triphosphates and nucleoside diphosphates. The chain is Nucleoside triphosphate/diphosphate phosphatase from Streptococcus pneumoniae serotype 19F (strain G54).